Here is a 293-residue protein sequence, read N- to C-terminus: Formamidopyrimidine-DNA glycosylase (293 aa).

The active-site Schiff-base intermediate with DNA is proline 2. Glutamate 3 functions as the Proton donor in the catalytic mechanism. The active-site Proton donor; for beta-elimination activity is the lysine 58. Positions 104, 127, and 170 each coordinate DNA. An FPG-type zinc finger spans residues 257-293 (SVYGREGKPCRNPACGGTVERVVQSGRSTFFCASCQT). The Proton donor; for delta-elimination activity role is filled by arginine 283.

The protein belongs to the FPG family. Monomer. Zn(2+) is required as a cofactor.

It carries out the reaction Hydrolysis of DNA containing ring-opened 7-methylguanine residues, releasing 2,6-diamino-4-hydroxy-5-(N-methyl)formamidopyrimidine.. The enzyme catalyses 2'-deoxyribonucleotide-(2'-deoxyribose 5'-phosphate)-2'-deoxyribonucleotide-DNA = a 3'-end 2'-deoxyribonucleotide-(2,3-dehydro-2,3-deoxyribose 5'-phosphate)-DNA + a 5'-end 5'-phospho-2'-deoxyribonucleoside-DNA + H(+). Its function is as follows. Involved in base excision repair of DNA damaged by oxidation or by mutagenic agents. Acts as a DNA glycosylase that recognizes and removes damaged bases. Has a preference for oxidized purines, such as 7,8-dihydro-8-oxoguanine (8-oxoG). Has AP (apurinic/apyrimidinic) lyase activity and introduces nicks in the DNA strand. Cleaves the DNA backbone by beta-delta elimination to generate a single-strand break at the site of the removed base with both 3'- and 5'-phosphates. The sequence is that of Formamidopyrimidine-DNA glycosylase from Brucella melitensis biotype 1 (strain ATCC 23456 / CCUG 17765 / NCTC 10094 / 16M).